The primary structure comprises 110 residues: Ribonuclease H2 subunit C (110 aa).

The segment at 45 to 69 is disordered; sequence LKREKSATPSSSDNTTSNTFSNGAI. Positions 51 to 66 are enriched in low complexity; sequence ATPSSSDNTTSNTFSN.

This sequence belongs to the RNase H2 subunit C family. Highly divergent. The RNase 2 complex is a heterotrimer composed of the catalytic subunit RNH201 and of the non-catalytic subunits RNH202 and RNH203.

The protein localises to the cytoplasm. The protein resides in the nucleus. Non catalytic subunit of RNase H2, an endonuclease that specifically degrades the RNA of RNA:DNA hybrids. Participates in DNA replication, possibly by mediating the removal of lagging-strand Okazaki fragment RNA primers during DNA replication. Mediates the excision of single ribonucleotides from DNA:RNA duplexes. The protein is Ribonuclease H2 subunit C (RNH203) of Saccharomyces cerevisiae (strain ATCC 204508 / S288c) (Baker's yeast).